Reading from the N-terminus, the 394-residue chain is Elongation factor Tu (394 aa).

The tr-type G domain maps to 10 to 204 (KPHVNVGTIG…ALDSYIPEPE (195 aa)). Residues 19 to 26 (GHVDHGKT) form a G1 region. A GTP-binding site is contributed by 19–26 (GHVDHGKT). T26 provides a ligand contact to Mg(2+). The segment at 60–64 (GITIN) is G2. Residues 81–84 (DCPG) form a G3 region. GTP contacts are provided by residues 81–85 (DCPGH) and 136–139 (NKCD). The interval 136 to 139 (NKCD) is G4. Residues 174–176 (SAL) form a G5 region.

Belongs to the TRAFAC class translation factor GTPase superfamily. Classic translation factor GTPase family. EF-Tu/EF-1A subfamily. As to quaternary structure, monomer.

It is found in the cytoplasm. It catalyses the reaction GTP + H2O = GDP + phosphate + H(+). Functionally, GTP hydrolase that promotes the GTP-dependent binding of aminoacyl-tRNA to the A-site of ribosomes during protein biosynthesis. The sequence is that of Elongation factor Tu from Sodalis glossinidius (strain morsitans).